Consider the following 328-residue polypeptide: MELLIQPNNRIIPFSAGANLLEVLRENGVAISYSCLSGRCGTCRCRVIDGSVIDSGAENGQSNLTDKQYVLACQSVLTGNCAIEVPEADEIVTHPARIIKGTVVAVESPTHDIRRLRVRLSKPFEFSPGQYATLQFSPEHARPYSMAGLPDDQEMEFHIRKVPGGRVTEYVFEHVREGTSIKLSGPLGTAYLRQKHTGPMLCVGGGTGLAPVLSIVRGALKSGMTNPILLYFGVRSQQDLYDAERLHKLAADHPQLTVHTVIATGPINEGQRAGLITDVIEKDILSLAGWRAYLCGAPAMVEALCTVTKHLGISPEHIYADAFYPGGI.

The 2Fe-2S ferredoxin-type domain occupies 1-89; that stretch reads MELLIQPNNR…NCAIEVPEAD (89 aa). Residues Cys-35, Cys-40, Cys-43, and Cys-73 each contribute to the [2Fe-2S] cluster site. The FAD-binding FR-type domain maps to 96 to 193; that stretch reads ARIIKGTVVA…SGPLGTAYLR (98 aa).

This sequence belongs to the bacterial ring-hydroxylating dioxygenase ferredoxin reductase component family. As to quaternary structure, the naphthalene dioxygenase (NDO) multicomponent enzyme system is composed of an electron transfer component and a dioxygenase component (iron sulfur protein (ISP)). The electron transfer component is composed of a ferredoxin reductase (NdoR) and a ferredoxin (NdoA), and the dioxygenase component is formed of a heterohexamer (trimer of heterodimers) of three large alpha subunits (NdoB) and three small beta subunits (NdoC). The cofactor is [2Fe-2S] cluster. FAD serves as cofactor.

The catalysed reaction is 2 reduced [2Fe-2S]-[ferredoxin] + NAD(+) + H(+) = 2 oxidized [2Fe-2S]-[ferredoxin] + NADH. The enzyme catalyses 2 reduced [2Fe-2S]-[ferredoxin] + NADP(+) + H(+) = 2 oxidized [2Fe-2S]-[ferredoxin] + NADPH. It participates in aromatic compound metabolism; naphthalene degradation. With respect to regulation, strongly inhibited by p-chloromercuribenzoate. Also inhibited by N-ethylmaleimide and o-phenanthroline. Its function is as follows. Component of the naphthalene dioxygenase (NDO) multicomponent enzyme system which catalyzes the incorporation of both atoms of molecular oxygen into naphthalene to form cis-(1R,2S)-dihydroxy-1,2-dihydronaphthalene. Ferredoxin reductase catalyzes the transfer of electrons from NADH to ferredoxin (NdoA). NADPH is also effective but yields only 39% of the activity obtained with NADH. Also able to catalyze the cis-dihydroxylation of biphenyl and phenanthrene. This chain is Naphthalene 1,2-dioxygenase system ferredoxin--NAD(P)(+), reductase component (ndoR), found in Pseudomonas putida (Arthrobacter siderocapsulatus).